Reading from the N-terminus, the 515-residue chain is uncharacterized protein (515 aa).

The next 3 membrane-spanning stretches (helical) occupy residues 1–21 (MSFV…LAGI), 165–185 (IGGP…GLLF), and 199–219 (GPVG…GLFG). The PE domain maps to 1-93 (MSFVVAAPEV…AGAYAGAEAA (93 aa)). Residues 349 to 360 (GGTLIGNGGDGG) are compositionally biased toward gly residues. 2 disordered regions span residues 349 to 368 (GGTL…TDGF) and 463 to 515 (GVSG…SPGG).

It belongs to the mycobacterial PE family. PGRS subfamily.

Its subcellular location is the cell membrane. This is an uncharacterized protein from Mycobacterium tuberculosis (strain CDC 1551 / Oshkosh).